A 604-amino-acid polypeptide reads, in one-letter code: Netrin-1 (604 aa).

The N-terminal stretch at 1–24 (MMRAVWEALAALAAVACLVGAVRG) is a signal peptide. In terms of domain architecture, Laminin N-terminal spans 47 to 284 (HPRRCIPDFV…AVSDLQVGGR (238 aa)). 3 N-linked (GlcNAc...) asparagine glycosylation sites follow: Asn-95, Asn-116, and Asn-131. Disulfide bonds link Cys-119-Cys-152, Cys-285-Cys-294, Cys-287-Cys-304, Cys-306-Cys-315, Cys-318-Cys-338, Cys-341-Cys-350, Cys-343-Cys-368, Cys-371-Cys-380, Cys-383-Cys-401, Cys-404-Cys-416, Cys-406-Cys-423, Cys-425-Cys-434, Cys-437-Cys-451, Cys-472-Cys-544, and Cys-491-Cys-601. 3 consecutive Laminin EGF-like domains span residues 285 to 340 (CKCN…ECVA), 341 to 403 (CNCN…ACKA), and 404 to 453 (CDCH…PCIK). The N-linked (GlcNAc...) asparagine glycan is linked to Asn-417. In terms of domain architecture, NTR spans 472-601 (CDSYCKASKG…FQQREKKGKC (130 aa)). Positions 530 to 532 (RGD) match the Cell attachment site motif.

Binds to its receptors; DCC, UNC5A, UNC5B, UNC5C and probably UNC5D. Binds to its receptor; DSCAM. Interacts with APP. As to expression, in the embryo, widely expressed in the developing nervous system and in mesodermal tissues.

The protein resides in the secreted. It is found in the cytoplasm. Netrins control guidance of CNS commissural axons and peripheral motor axons. Its association with either DCC or some UNC5 receptors will lead to axon attraction or repulsion, respectively. Binding to UNC5C might cause dissociation of UNC5C from polymerized TUBB3 in microtubules and thereby lead to increased microtubule dynamics and axon repulsion. Involved in dorsal root ganglion axon projection towards the spinal cord. It also serves as a survival factor via its association with its receptors which prevent the initiation of apoptosis. Involved in colorectal tumorigenesis by regulating apoptosis. The protein is Netrin-1 (Ntn1) of Mus musculus (Mouse).